Consider the following 272-residue polypeptide: uncharacterized protein (272 aa).

Positions 101-130 are disordered; sequence CPTGKKNKAPSSLIPKISKTSTSSLTKEDE. The span at 110-125 shows a compositional bias: low complexity; the sequence is PSSLIPKISKTSTSSL. A Phosphoserine modification is found at Ser-142.

This is an uncharacterized protein from Arabidopsis thaliana (Mouse-ear cress).